The following is a 323-amino-acid chain: tRNA uridine(34) hydroxylase (323 aa).

Residues Gln-127–Asp-221 enclose the Rhodanese domain. The active-site Cysteine persulfide intermediate is Cys-181.

Belongs to the TrhO family.

It catalyses the reaction uridine(34) in tRNA + AH2 + O2 = 5-hydroxyuridine(34) in tRNA + A + H2O. In terms of biological role, catalyzes oxygen-dependent 5-hydroxyuridine (ho5U) modification at position 34 in tRNAs. This is tRNA uridine(34) hydroxylase from Oceanobacillus iheyensis (strain DSM 14371 / CIP 107618 / JCM 11309 / KCTC 3954 / HTE831).